We begin with the raw amino-acid sequence, 291 residues long: Elongation factor Ts (291 aa).

Residues 79-82 (TDFV) are involved in Mg(2+) ion dislocation from EF-Tu.

Belongs to the EF-Ts family.

It localises to the cytoplasm. Functionally, associates with the EF-Tu.GDP complex and induces the exchange of GDP to GTP. It remains bound to the aminoacyl-tRNA.EF-Tu.GTP complex up to the GTP hydrolysis stage on the ribosome. The chain is Elongation factor Ts from Ruegeria pomeroyi (strain ATCC 700808 / DSM 15171 / DSS-3) (Silicibacter pomeroyi).